The sequence spans 248 residues: Granzyme-like protein 1 (248 aa).

The N-terminal stretch at 1–18 is a signal peptide; that stretch reads MNLLLLLLTVSLAPTTEA. A propeptide spans 19–20 (activation peptide); the sequence is AE. The region spanning 21 to 246 is the Peptidase S1 domain; it reads IIGGHEADPH…FLSWIEETMK (226 aa). Residues Cys-50 and Cys-66 are joined by a disulfide bond. Catalysis depends on His-65, which acts as the Charge relay system. Asn-72 is a glycosylation site (N-linked (GlcNAc...) asparagine). Catalysis depends on Asp-109, which acts as the Charge relay system. 2 disulfides stabilise this stretch: Cys-143-Cys-210 and Cys-174-Cys-189. The active-site Charge relay system is the Ser-204.

It belongs to the peptidase S1 family. Granzyme subfamily. As to expression, duodenum.

In terms of biological role, this enzyme is necessary for target cell lysis in cell-mediated immune responses. This is Granzyme-like protein 1 from Rattus norvegicus (Rat).